The following is a 312-amino-acid chain: MPATLHDSTKILSLNTGAQIPQIGLGTWQSKENDAYKAVLTALKDGYRHIDTAAIYRNEDQVGQAIKDSGVPREEIFVTTKLWCTQHHEPEVALDQSLKRLGLDYVDLYLMHWPARLDPAYIKNEDILSVPTKKDGSRAVDITNWNFIKTWELMQELPKTGKTKAVGVSNFSINNLKDLLASQGNKLTPAANQVEIHPLLPQDELINFCKSKGIVVEAYSPLGSTDAPLLKEPVILEIAKKNNVQPGHVVISWHVQRGYVVLPKSVNPDRIKTNRKIFTLSTEDFEAINNISKEKGEKRVVHPNWSPFEVFK.

The active-site Proton donor is the Tyr-56. Residue His-112 coordinates substrate. Residue 220–274 (SPLGSTDAPLLKEPVILEIAKKNNVQPGHVVISWHVQRGYVVLPKSVNPDRIKTN) participates in NADP(+) binding. Residue Ser-306 is modified to Phosphoserine.

The protein belongs to the aldo/keto reductase family.

It localises to the cytoplasm. It catalyses the reaction glycerol + NADP(+) = dihydroxyacetone + NADPH + H(+). Glycerol dehydrogenase involved in glycerol catabolism under microaerobic conditions. Has mRNA binding activity. The protein is Glycerol 2-dehydrogenase (NADP(+)) (GCY1) of Saccharomyces cerevisiae (strain ATCC 204508 / S288c) (Baker's yeast).